A 317-amino-acid polypeptide reads, in one-letter code: Ribose-phosphate pyrophosphokinase (317 aa).

ATP contacts are provided by residues 41–43 (DME) and 100–101 (RQ). 2 residues coordinate Mg(2+): H134 and D174. The active site involves K197. D-ribose 5-phosphate-binding positions include R199, D223, and 227–231 (DSGGT).

It belongs to the ribose-phosphate pyrophosphokinase family. Class I subfamily. Homohexamer. The cofactor is Mg(2+).

It localises to the cytoplasm. The catalysed reaction is D-ribose 5-phosphate + ATP = 5-phospho-alpha-D-ribose 1-diphosphate + AMP + H(+). It functions in the pathway metabolic intermediate biosynthesis; 5-phospho-alpha-D-ribose 1-diphosphate biosynthesis; 5-phospho-alpha-D-ribose 1-diphosphate from D-ribose 5-phosphate (route I): step 1/1. Involved in the biosynthesis of the central metabolite phospho-alpha-D-ribosyl-1-pyrophosphate (PRPP) via the transfer of pyrophosphoryl group from ATP to 1-hydroxyl of ribose-5-phosphate (Rib-5-P). The polypeptide is Ribose-phosphate pyrophosphokinase (Bradyrhizobium diazoefficiens (strain JCM 10833 / BCRC 13528 / IAM 13628 / NBRC 14792 / USDA 110)).